The following is a 228-amino-acid chain: Endo-1,4-beta-xylanase B (228 aa).

The N-terminal stretch at Met-1–Ala-19 is a signal peptide. The region spanning Lys-37 to Ser-227 is the GH11 domain. Glu-122 serves as the catalytic Nucleophile. The active-site Proton donor is the Glu-214.

Belongs to the glycosyl hydrolase 11 (cellulase G) family.

It localises to the secreted. It catalyses the reaction Endohydrolysis of (1-&gt;4)-beta-D-xylosidic linkages in xylans.. It participates in glycan degradation; xylan degradation. Inhibited by the proteinaceous endoxylanase inhibitor I from T.aestivum (TAXI-I). In terms of biological role, endo-1,4-beta-xylanase involved in the hydrolysis of xylan, a major structural heterogeneous polysaccharide found in plant biomass representing the second most abundant polysaccharide in the biosphere, after cellulose. Plays an important role in causing fusarium head blight (FHB) on cereal crops. Induces cell death and hydrogen peroxide accumulation in infected wheat leaves. The polypeptide is Endo-1,4-beta-xylanase B (XYLB) (Gibberella zeae (strain ATCC MYA-4620 / CBS 123657 / FGSC 9075 / NRRL 31084 / PH-1) (Wheat head blight fungus)).